The chain runs to 371 residues: Chorismate synthase (371 aa).

The NADP(+) site is built by R48 and R54. Residues 125-127 (RSS), 238-239 (NA), G278, 293-297 (KPTSS), and R319 each bind FMN.

It belongs to the chorismate synthase family. Homotetramer. FMNH2 serves as cofactor.

It carries out the reaction 5-O-(1-carboxyvinyl)-3-phosphoshikimate = chorismate + phosphate. It participates in metabolic intermediate biosynthesis; chorismate biosynthesis; chorismate from D-erythrose 4-phosphate and phosphoenolpyruvate: step 7/7. Catalyzes the anti-1,4-elimination of the C-3 phosphate and the C-6 proR hydrogen from 5-enolpyruvylshikimate-3-phosphate (EPSP) to yield chorismate, which is the branch point compound that serves as the starting substrate for the three terminal pathways of aromatic amino acid biosynthesis. This reaction introduces a second double bond into the aromatic ring system. The protein is Chorismate synthase of Polynucleobacter asymbioticus (strain DSM 18221 / CIP 109841 / QLW-P1DMWA-1) (Polynucleobacter necessarius subsp. asymbioticus).